We begin with the raw amino-acid sequence, 127 residues long: Large ribosomal subunit protein bL20 (127 aa).

Belongs to the bacterial ribosomal protein bL20 family.

Its function is as follows. Binds directly to 23S ribosomal RNA and is necessary for the in vitro assembly process of the 50S ribosomal subunit. It is not involved in the protein synthesizing functions of that subunit. The chain is Large ribosomal subunit protein bL20 from Bifidobacterium animalis subsp. lactis (strain AD011).